We begin with the raw amino-acid sequence, 682 residues long: Epithelial sodium channel subunit alpha (682 aa).

The Cytoplasmic segment spans residues methionine 1 to alanine 111. The interval alanine 34–glutamate 69 is disordered. The helical transmembrane segment at phenylalanine 112–phenylalanine 132 threads the bilayer. Residues glycine 133–serine 586 lie on the Extracellular side of the membrane. Intrachain disulfides connect cysteine 159–cysteine 329, cysteine 253–cysteine 260, cysteine 306–cysteine 313, cysteine 418–cysteine 503, cysteine 440–cysteine 480, cysteine 440–cysteine 499, cysteine 444–cysteine 495, cysteine 453–cysteine 480, cysteine 453–cysteine 503, and cysteine 455–cysteine 469. Asparagine 191 is a glycosylation site (N-linked (GlcNAc...) asparagine). The interval arginine 201 to serine 267 is gating release of inhibition by proteolysis (GRIP); protease-sensitive region that is responsible for the proteolytic activation of the channel. A disordered region spans residues proline 221 to arginine 240. N-linked (GlcNAc...) asparagine glycosylation is present at asparagine 504. The chain crosses the membrane as a helical span at residues valine 587–methionine 607. Residues leucine 608–proline 682 lie on the Cytoplasmic side of the membrane. Positions proline 653–tyrosine 657 match the PY motif; recruits WW domain-containing proteins and is thereby required for ubiquitination and inhibition of the channel by NEDD4 and NEDD4L motif.

This sequence belongs to the amiloride-sensitive sodium channel (TC 1.A.6) family. SCNN1A subfamily. As to quaternary structure, heterotrimer; containing an alpha/SCNN1A, a beta/SCNN1B and a gamma/SCNN1G subunit. Interacts with WWP1 (via WW domains). Interacts with WWP2 (via WW domains); inhibits the channel. Interacts with BPIFA1; the interaction is indirect via SCNN1B and inhibits the proteolytic processing of SCNN1A and SCNN1G and the activation of ENaC. Interacts with the full-length immature form of PCSK9 (pro-PCSK9). Post-translationally, ubiquitinated. Can be ubiquitinated at multiple sites and undergo monoubiquitination and polyubiquitination. Ubiquitination by NEDD4 or NEDD4L inhibits the ENaC channel through endocytosis, intracellular retention and degradation of its individual subunits. N-glycosylated. In terms of processing, ENaC is activated through the proteolytic maturation of its subunits. Furin cleaves the SCNN1A subunit, which results in a stepwise increase in the open probability of the channel due to the release of an inhibitory tract. BPIFA1, which is recruited by the SCNN1B subunit, prevents the proteolytic activation of ENaC.

The protein resides in the apical cell membrane. It localises to the cell projection. It is found in the cilium. The protein localises to the cytoplasmic granule. Its subcellular location is the cytoplasm. The protein resides in the cytoplasmic vesicle. It localises to the secretory vesicle. It is found in the acrosome. The protein localises to the flagellum. It catalyses the reaction Na(+)(in) = Na(+)(out). Its activity is regulated as follows. Originally identified and characterized by its inhibition by the diuretic drug amiloride. This is one of the three pore-forming subunits of the heterotrimeric epithelial sodium channel (ENaC), a critical regulator of sodium balance and fluid homeostasis. ENaC operates in epithelial tissues, where it mediates the electrodiffusion of sodium ions from extracellular fluid through the apical membrane of cells, with water following osmotically. It plays a key role in maintaining sodium homeostasis through electrogenic sodium reabsorption in the kidneys. Additionally, ENaC is essential for airway surface liquid homeostasis, which is crucial for proper mucus clearance. This Cavia porcellus (Guinea pig) protein is Epithelial sodium channel subunit alpha.